Reading from the N-terminus, the 236-residue chain is Probable transcriptional activator protein TraR (236 aa).

The HTH luxR-type domain maps to 169-234; sequence VLNPKQMLSP…QLVAIAKDRG (66 aa). The H-T-H motif DNA-binding region spans 193 to 212; it reads ASVTANLTGINARTVQHYLD.

The protein belongs to the autoinducer-regulated transcriptional regulatory protein family.

Its function is as follows. Positive regulation of conjugal transfer. TraR activates target genes in the presence of AAI and also activates traR and traI themselves. In Sinorhizobium fredii (strain NBRC 101917 / NGR234), this protein is Probable transcriptional activator protein TraR (traR).